The sequence spans 485 residues: Alginate biosynthesis protein AlgA (485 aa).

Belongs to the mannose-6-phosphate isomerase type 2 family. In terms of assembly, monomer. Co(2+) serves as cofactor.

It carries out the reaction D-mannose 6-phosphate = D-fructose 6-phosphate. The enzyme catalyses alpha-D-mannose 1-phosphate + GTP + H(+) = GDP-alpha-D-mannose + diphosphate. It participates in nucleotide-sugar biosynthesis; GDP-alpha-D-mannose biosynthesis; GDP-alpha-D-mannose from alpha-D-mannose 1-phosphate (GTP route): step 1/1. The protein operates within nucleotide-sugar biosynthesis; GDP-alpha-D-mannose biosynthesis; alpha-D-mannose 1-phosphate from D-fructose 6-phosphate: step 1/2. In terms of biological role, produces a precursor for alginate polymerization. The alginate layer provides a protective barrier against host immune defenses and antibiotics. The protein is Alginate biosynthesis protein AlgA (algA) of Pseudomonas putida (strain ATCC 47054 / DSM 6125 / CFBP 8728 / NCIMB 11950 / KT2440).